The sequence spans 96 residues: Large ribosomal subunit protein bL21 (96 aa).

Residues 73-84 (KRRKRYQSRNGH) are compositionally biased toward basic residues. Residues 73 to 96 (KRRKRYQSRNGHRQQMTQIEVVSL) are disordered. Residues 85 to 96 (RQQMTQIEVVSL) are compositionally biased toward polar residues.

It belongs to the bacterial ribosomal protein bL21 family. Part of the 50S ribosomal subunit. Contacts protein L20.

Its function is as follows. This protein binds to 23S rRNA in the presence of protein L20. The polypeptide is Large ribosomal subunit protein bL21 (Chlorobium phaeovibrioides (strain DSM 265 / 1930) (Prosthecochloris vibrioformis (strain DSM 265))).